Here is a 236-residue protein sequence, read N- to C-terminus: NAD(P)H-hydrate epimerase (236 aa).

Residues Ala-11–Val-217 form the YjeF N-terminal domain. Position 61-65 (Asn-61–Asp-65) interacts with (6S)-NADPHX. K(+) is bound by residues Asn-62 and Asp-123. Residues Gly-127–Glu-133 and Asp-156 each bind (6S)-NADPHX. Ser-159 is a K(+) binding site.

It belongs to the NnrE/AIBP family. K(+) serves as cofactor.

The protein localises to the cytoplasm. Its subcellular location is the mitochondrion. It carries out the reaction (6R)-NADHX = (6S)-NADHX. The enzyme catalyses (6R)-NADPHX = (6S)-NADPHX. In terms of biological role, catalyzes the epimerization of the S- and R-forms of NAD(P)HX, a damaged form of NAD(P)H that is a result of enzymatic or heat-dependent hydration. This is a prerequisite for the S-specific NAD(P)H-hydrate dehydratase to allow the repair of both epimers of NAD(P)HX. The sequence is that of NAD(P)H-hydrate epimerase from Fusarium vanettenii (strain ATCC MYA-4622 / CBS 123669 / FGSC 9596 / NRRL 45880 / 77-13-4) (Fusarium solani subsp. pisi).